The primary structure comprises 272 residues: Acyl-[acyl-carrier-protein]--UDP-N-acetylglucosamine O-acyltransferase (272 aa).

Belongs to the transferase hexapeptide repeat family. LpxA subfamily. In terms of assembly, homotrimer.

It is found in the cytoplasm. It carries out the reaction a (3R)-hydroxyacyl-[ACP] + UDP-N-acetyl-alpha-D-glucosamine = a UDP-3-O-[(3R)-3-hydroxyacyl]-N-acetyl-alpha-D-glucosamine + holo-[ACP]. It participates in glycolipid biosynthesis; lipid IV(A) biosynthesis; lipid IV(A) from (3R)-3-hydroxytetradecanoyl-[acyl-carrier-protein] and UDP-N-acetyl-alpha-D-glucosamine: step 1/6. Functionally, involved in the biosynthesis of lipid A, a phosphorylated glycolipid that anchors the lipopolysaccharide to the outer membrane of the cell. The sequence is that of Acyl-[acyl-carrier-protein]--UDP-N-acetylglucosamine O-acyltransferase from Rhizobium leguminosarum bv. trifolii (strain WSM2304).